A 267-amino-acid chain; its full sequence is 4-hydroxy-tetrahydrodipicolinate reductase (267 aa).

Residue G8–M13 participates in NAD(+) binding. Position 35 (R35) interacts with NADP(+). NAD(+)-binding positions include G98–T100 and A122–M125. Catalysis depends on H155, which acts as the Proton donor/acceptor. H156 provides a ligand contact to (S)-2,3,4,5-tetrahydrodipicolinate. K159 serves as the catalytic Proton donor. G165–T166 is a (S)-2,3,4,5-tetrahydrodipicolinate binding site.

Belongs to the DapB family.

The protein localises to the cytoplasm. The catalysed reaction is (S)-2,3,4,5-tetrahydrodipicolinate + NAD(+) + H2O = (2S,4S)-4-hydroxy-2,3,4,5-tetrahydrodipicolinate + NADH + H(+). The enzyme catalyses (S)-2,3,4,5-tetrahydrodipicolinate + NADP(+) + H2O = (2S,4S)-4-hydroxy-2,3,4,5-tetrahydrodipicolinate + NADPH + H(+). It functions in the pathway amino-acid biosynthesis; L-lysine biosynthesis via DAP pathway; (S)-tetrahydrodipicolinate from L-aspartate: step 4/4. Catalyzes the conversion of 4-hydroxy-tetrahydrodipicolinate (HTPA) to tetrahydrodipicolinate. This is 4-hydroxy-tetrahydrodipicolinate reductase from Hahella chejuensis (strain KCTC 2396).